A 196-amino-acid polypeptide reads, in one-letter code: Thymidylate kinase (196 aa).

ATP is bound at residue 7-14; the sequence is GIDGSGKT.

The protein belongs to the thymidylate kinase family.

The catalysed reaction is dTMP + ATP = dTDP + ADP. Functionally, phosphorylation of dTMP to form dTDP in both de novo and salvage pathways of dTTP synthesis. In Wolbachia pipientis wMel, this protein is Thymidylate kinase.